The chain runs to 440 residues: Xaa-Pro dipeptidase (440 aa).

Positions 244, 255, 336, 381, and 420 each coordinate Mn(2+).

The protein belongs to the peptidase M24B family. Mn(2+) is required as a cofactor. The N-terminus is blocked.

It carries out the reaction Xaa-L-Pro dipeptide + H2O = an L-alpha-amino acid + L-proline. It catalyses the reaction diisopropyl fluorophosphate + H2O = diisopropyl phosphate + fluoride + 2 H(+). Its function is as follows. Splits dipeptides with a prolyl or hydroxyprolyl residue in the C-terminal position and a nonpolar amino acid at the N-terminal position. Also catalyzes the hydrolysis of toxic organophosphorus cholinesterase-inhibiting compounds including nerve gases such as diisopropylfluorophosphate (DFP), O-isopropyl methylphosphonofluoridate (sarin), O-pinacolyl methylphosphonofluoridate (soman), and O-cyclohexyl methylphosphonofluoridate. The sequence is that of Xaa-Pro dipeptidase (pepQ) from Pseudoalteromonas haloplanktis (Alteromonas haloplanktis).